We begin with the raw amino-acid sequence, 276 residues long: Bis(5'-nucleosyl)-tetraphosphatase, symmetrical (276 aa).

It belongs to the Ap4A hydrolase family.

It catalyses the reaction P(1),P(4)-bis(5'-adenosyl) tetraphosphate + H2O = 2 ADP + 2 H(+). Hydrolyzes diadenosine 5',5'''-P1,P4-tetraphosphate to yield ADP. This chain is Bis(5'-nucleosyl)-tetraphosphatase, symmetrical, found in Legionella pneumophila subsp. pneumophila (strain Philadelphia 1 / ATCC 33152 / DSM 7513).